The chain runs to 506 residues: Maturase K (506 aa).

The protein belongs to the intron maturase 2 family. MatK subfamily.

Its subcellular location is the plastid. The protein resides in the chloroplast. Usually encoded in the trnK tRNA gene intron. Probably assists in splicing its own and other chloroplast group II introns. The polypeptide is Maturase K (Sullivantia sullivantii (Sullivant's coolwort)).